Here is a 1171-residue protein sequence, read N- to C-terminus: DExH-box ATP-dependent RNA helicase DExH15 chloroplastic (1171 aa).

Residues 1–58 (MNTLPVVSLTASSSFKFFHFPSLHRSLSHSPNFSFTKSLILNPNHLSFKSTLNSLSPS) constitute a chloroplast transit peptide. Residues 53–62 (NSLSPSQSQL) are compositionally biased toward polar residues. The disordered stretch occupies residues 53-111 (NSLSPSQSQLYEEEDDEEEEEEDEDDDDEAADEYDNISDEIRNSDDDDDDEETEFSVDL). Composition is skewed to acidic residues over residues 63–90 (YEEE…DNIS) and 97–107 (DDDDDDEETEF). The Helicase ATP-binding domain maps to 163–327 (IEAFLRGSSV…WIGEIHGKTE (165 aa)). 176 to 183 (APTSSGKT) is a binding site for ATP. The DEVH box motif lies at 275 to 278 (DEVH). One can recognise a Helicase C-terminal domain in the interval 424–620 (QISDTLWHLQ…ASYGMVLNLV (197 aa)).

This sequence belongs to the DExH box helicase family.

The protein resides in the plastid. It localises to the chloroplast. The protein localises to the cytoplasmic granule. The catalysed reaction is ATP + H2O = ADP + phosphate + H(+). RNA helicase involved in group II intron splicing. Essential protein required during embryogenesis. Involved in post-transcriptional gene silencing. Modulates the determination of cell fate. Necessary for normal plasmodesmata (PD) development and aperture regulation. In Arabidopsis thaliana (Mouse-ear cress), this protein is DExH-box ATP-dependent RNA helicase DExH15 chloroplastic (ISE2).